The chain runs to 175 residues: Large ribosomal subunit protein eL14 (175 aa).

The tract at residues Lys150–Lys175 is disordered. The span at Ala152–Lys161 shows a compositional bias: basic and acidic residues. A compositionally biased stretch (basic residues) spans Arg162–Lys175.

Belongs to the eukaryotic ribosomal protein eL14 family.

In terms of biological role, component of the large ribosomal subunit. The ribosome is a large ribonucleoprotein complex responsible for the synthesis of proteins in the cell. This is Large ribosomal subunit protein eL14 (RPL14) from Leishmania donovani.